The sequence spans 1005 residues: Non-structural polyprotein 1A (1005 aa).

The next 4 membrane-spanning stretches (helical) occupy residues 239-259 (PDGAFDKESLALECSKQMDYM), 286-306 (DEIVTAIRTVVRFAMDFSLAY), 313-333 (VLILTRNKKHAIISACCALVA), and 344-364 (TLVLTYAPSETAIAGCIYGLG). Catalysis depends on charge relay system; for serine protease activity residues histidine 524, aspartate 556, and serine 621. Tyrosine 753 carries the post-translational modification O-(5'-phospho-RNA)-tyrosine. Positions 940 to 984 (PVIQQVEQQPQVEQQQQPQQPVVEEKKRTPPPKPQRKPKTGAKAK) are disordered. Low complexity predominate over residues 941–961 (VIQQVEQQPQVEQQQQPQQPV).

It belongs to the astroviridae polyprotein 1A family. Monomer. Post-translationally, cleaved by the viral and host proteases. The protease is probably autocatalytically cleaved.

Its subcellular location is the host membrane. It catalyses the reaction RNA(n) + a ribonucleoside 5'-triphosphate = RNA(n+1) + diphosphate. Functionally, responsible for the cleavage of the polyprotein into functional products. Its function is as follows. Protein covalently attached to the 5' extremity of the genomic and subgenomic RNAs. It may serve as a primer for the replicase. The sequence is that of Non-structural polyprotein 1A (ORF1) from Avian nephritis virus 1 (ANV-1).